Here is a 103-residue protein sequence, read N- to C-terminus: N(4)-acetylcytidine amidohydrolase (103 aa).

The 89-residue stretch at 6 to 94 folds into the ASCH domain; it reads ITFFQRFQND…IAEIYPNQTQ (89 aa). Lys-21 functions as the Proton acceptor in the catalytic mechanism. Thr-24 functions as the Nucleophile in the catalytic mechanism. Catalysis depends on Glu-74, which acts as the Proton donor.

This sequence belongs to the N(4)-acetylcytidine amidohydrolase family.

It carries out the reaction N(4)-acetylcytidine + H2O = cytidine + acetate + H(+). It catalyses the reaction N(4)-acetyl-2'-deoxycytidine + H2O = 2'-deoxycytidine + acetate + H(+). The enzyme catalyses N(4)-acetylcytosine + H2O = cytosine + acetate + H(+). In terms of biological role, catalyzes the hydrolysis of N(4)-acetylcytidine (ac4C). The sequence is that of N(4)-acetylcytidine amidohydrolase (yqfB) from Salmonella typhi.